Here is a 126-residue protein sequence, read N- to C-terminus: Aspartate 1-decarboxylase (126 aa).

The active-site Schiff-base intermediate with substrate; via pyruvic acid is the S25. Residue S25 is modified to Pyruvic acid (Ser). T57 contributes to the substrate binding site. The active-site Proton donor is Y58. 72–74 (GAT) contributes to the substrate binding site.

It belongs to the PanD family. As to quaternary structure, heterooctamer of four alpha and four beta subunits. Requires pyruvate as cofactor. Post-translationally, is synthesized initially as an inactive proenzyme, which is activated by self-cleavage at a specific serine bond to produce a beta-subunit with a hydroxyl group at its C-terminus and an alpha-subunit with a pyruvoyl group at its N-terminus.

It is found in the cytoplasm. It carries out the reaction L-aspartate + H(+) = beta-alanine + CO2. It participates in cofactor biosynthesis; (R)-pantothenate biosynthesis; beta-alanine from L-aspartate: step 1/1. In terms of biological role, catalyzes the pyruvoyl-dependent decarboxylation of aspartate to produce beta-alanine. In Campylobacter jejuni subsp. doylei (strain ATCC BAA-1458 / RM4099 / 269.97), this protein is Aspartate 1-decarboxylase.